A 371-amino-acid chain; its full sequence is Bifunctional enzyme IspD/IspF (371 aa).

The 2-C-methyl-D-erythritol 4-phosphate cytidylyltransferase stretch occupies residues 1–214 (MNSCFIILAG…NSDIKFNNLI (214 aa)). Positions 215–371 (KFGIGFDVHR…EVIASVIKND (157 aa)) are 2-C-methyl-D-erythritol 2,4-cyclodiphosphate synthase. The a divalent metal cation site is built by Asp221 and His223. Residues 221–223 (DVH) and 247–248 (HS) each bind 4-CDP-2-C-methyl-D-erythritol 2-phosphate. His255 serves as a coordination point for a divalent metal cation. 4-CDP-2-C-methyl-D-erythritol 2-phosphate-binding positions include 269–271 (DIG), 274–278 (FSDKN), and Lys355.

In the N-terminal section; belongs to the IspD/TarI cytidylyltransferase family. IspD subfamily. This sequence in the C-terminal section; belongs to the IspF family. Requires a divalent metal cation as cofactor.

It catalyses the reaction 2-C-methyl-D-erythritol 4-phosphate + CTP + H(+) = 4-CDP-2-C-methyl-D-erythritol + diphosphate. The catalysed reaction is 4-CDP-2-C-methyl-D-erythritol 2-phosphate = 2-C-methyl-D-erythritol 2,4-cyclic diphosphate + CMP. Its pathway is isoprenoid biosynthesis; isopentenyl diphosphate biosynthesis via DXP pathway; isopentenyl diphosphate from 1-deoxy-D-xylulose 5-phosphate: step 2/6. It functions in the pathway isoprenoid biosynthesis; isopentenyl diphosphate biosynthesis via DXP pathway; isopentenyl diphosphate from 1-deoxy-D-xylulose 5-phosphate: step 4/6. Functionally, bifunctional enzyme that catalyzes the formation of 4-diphosphocytidyl-2-C-methyl-D-erythritol from CTP and 2-C-methyl-D-erythritol 4-phosphate (MEP) (IspD), and catalyzes the conversion of 4-diphosphocytidyl-2-C-methyl-D-erythritol 2-phosphate (CDP-ME2P) to 2-C-methyl-D-erythritol 2,4-cyclodiphosphate (ME-CPP) with a corresponding release of cytidine 5-monophosphate (CMP) (IspF). The polypeptide is Bifunctional enzyme IspD/IspF (Pelagibacter ubique (strain HTCC1062)).